The chain runs to 109 residues: Ribonuclease P protein component 2 (109 aa).

It belongs to the eukaryotic/archaeal RNase P protein component 2 family. Consists of a catalytic RNA component and at least 4-5 protein subunits.

It is found in the cytoplasm. It catalyses the reaction Endonucleolytic cleavage of RNA, removing 5'-extranucleotides from tRNA precursor.. Its function is as follows. Part of ribonuclease P, a protein complex that generates mature tRNA molecules by cleaving their 5'-ends. This is Ribonuclease P protein component 2 from Archaeoglobus fulgidus (strain ATCC 49558 / DSM 4304 / JCM 9628 / NBRC 100126 / VC-16).